A 242-amino-acid polypeptide reads, in one-letter code: LexA repressor (242 aa).

The H-T-H motif DNA-binding region spans 26–46; the sequence is FEEMKAALNLKSKSGIHRLIS. Active-site for autocatalytic cleavage activity residues include Ser163 and Lys201.

The protein belongs to the peptidase S24 family. As to quaternary structure, homodimer.

The enzyme catalyses Hydrolysis of Ala-|-Gly bond in repressor LexA.. Its function is as follows. Represses a number of genes involved in the response to DNA damage (SOS response), including recA and lexA. In the presence of single-stranded DNA, RecA interacts with LexA causing an autocatalytic cleavage which disrupts the DNA-binding part of LexA, leading to derepression of the SOS regulon and eventually DNA repair. This chain is LexA repressor, found in Granulibacter bethesdensis (strain ATCC BAA-1260 / CGDNIH1).